Here is a 30-residue protein sequence, read N- to C-terminus: Cliotide T6 (30 aa).

The segment at residues 1–30 (SIPCGESCVYIPCITTIVGCSCKDKVCYKN) is a cross-link (cyclopeptide (Ser-Asn)). Disulfide bonds link Cys-4/Cys-20, Cys-8/Cys-22, and Cys-13/Cys-27.

Contains 3 disulfide bonds. Post-translationally, this is a cyclic peptide. As to expression, expressed in pod but not in flower, stem, shoot, leaf, seed, root and nodule (at protein level).

In terms of biological role, probably participates in a plant defense mechanism. This chain is Cliotide T6, found in Clitoria ternatea (Butterfly pea).